We begin with the raw amino-acid sequence, 175 residues long: MDPSVKKDEIYYTILNIIQNYFIEYCTGKNRNFHVEDENTYIIVKNMCDIILRDNIVEFRKDIDRCSDIENEIPEIVYDTIHDKITWGRVISIIAFGAYVTKVFKEKGRDNVVDLMPDIITESLLSRCRSWLSDQNCWDGLKAYVYNNKKFYYVTRYFRVAAFIITSLAVINLFL.

Residues 152-174 (YYVTRYFRVAAFIITSLAVINLF) traverse the membrane as a helical segment.

As to quaternary structure, interacts with host BAK1 and BAX as well as other BH3-containing proteins including BIM, BID or PUMA.

The protein resides in the host membrane. Functionally, plays a role in the inhibition of host apoptosis. Interacts with host proapoptotic factors BAK1 and BAX to supposedly prevent their activation. The protein is Apoptosis regulator Bcl-2 homolog (CNPV058) of Canarypox virus (CNPV).